The sequence spans 191 residues: Peptidyl-tRNA hydrolase (191 aa).

Y17 contacts tRNA. The Proton acceptor role is filled by H22. Residues Y68, N70, and N116 each contribute to the tRNA site.

This sequence belongs to the PTH family. Monomer.

The protein localises to the cytoplasm. The enzyme catalyses an N-acyl-L-alpha-aminoacyl-tRNA + H2O = an N-acyl-L-amino acid + a tRNA + H(+). Hydrolyzes ribosome-free peptidyl-tRNAs (with 1 or more amino acids incorporated), which drop off the ribosome during protein synthesis, or as a result of ribosome stalling. In terms of biological role, catalyzes the release of premature peptidyl moieties from peptidyl-tRNA molecules trapped in stalled 50S ribosomal subunits, and thus maintains levels of free tRNAs and 50S ribosomes. The protein is Peptidyl-tRNA hydrolase of Mycobacterium tuberculosis (strain ATCC 25177 / H37Ra).